The chain runs to 616 residues: Chaperone protein HtpG (616 aa).

The a; substrate-binding stretch occupies residues 1–333 (MKKQFDTEVN…CQDLPLNVSR (333 aa)). Positions 334–542 (EILQQNKILS…SNDPTYQMQK (209 aa)) are b. The segment at 543–616 (IMLSMGQEVK…INEFLEKELL (74 aa)) is c.

This sequence belongs to the heat shock protein 90 family. As to quaternary structure, homodimer.

It is found in the cytoplasm. In terms of biological role, molecular chaperone. Has ATPase activity. This Borrelia garinii subsp. bavariensis (strain ATCC BAA-2496 / DSM 23469 / PBi) (Borreliella bavariensis) protein is Chaperone protein HtpG.